We begin with the raw amino-acid sequence, 127 residues long: MORF4 family-associated protein 1 (127 aa).

The tract at residues 76 to 97 (ESALNHLQNPDDGAEGRGTKRC) is disordered. A coiled-coil region spans residues 92-126 (RGTKRCEKAEEKAKEIAKMAEMLVELVRRIEKSES).

Belongs to the MORF4 family-associated protein family. As to quaternary structure, found in a complex composed of MORF4L1, MRFAP1 and RB1. Interacts via its N-terminus with MORF4L1. Interacts with CSTB and MORF4L2.

The protein resides in the nucleus. Its subcellular location is the cytoplasm. It is found in the perinuclear region. The sequence is that of MORF4 family-associated protein 1 from Bos taurus (Bovine).